The primary structure comprises 136 residues: Membrane-bound negative regulator YvrL (136 aa).

A run of 4 helical transmembrane segments spans residues 18-38 (LLAAAAVVLTYFAVIYILFSL), 46-66 (AAHVLLFAVVFLVLGLCFEPF), 83-103 (LFILLAGIVQLLFLWMTAHTT), and 106-126 (LISDIWLSTTEEMIVAAVFLI).

The protein resides in the cell membrane. Negatively regulates RNA polymerase sigma factor SigO-dependent transcription. Prevents the expression or secretion of OxdC under nonstress conditions. May act as an anti-sigma factor. This Bacillus subtilis (strain 168) protein is Membrane-bound negative regulator YvrL (yvrL).